Consider the following 262-residue polypeptide: Matrilysin (262 aa).

The first 12 residues, 1–12 (LCVLCLLPQSPA), serve as a signal peptide directing secretion. Positions 13-89 (LPLPREAGGH…PRCGLPDTGE (77 aa)) are cleaved as a propeptide — activation peptide. A Cysteine switch motif is present at residues 80–87 (PRCGLPDT). Cys-82 contributes to the Zn(2+) binding site. Asp-148 is a Ca(2+) binding site. The Zn(2+) site is built by His-158 and Asp-160. Residues Asp-165, Gly-166, Gly-168, and Thr-170 each coordinate Ca(2+). His-173 is a binding site for Zn(2+). Gly-180, Gly-182, and Asp-184 together coordinate Ca(2+). Residue His-186 participates in Zn(2+) binding. Asp-188 and Glu-191 together coordinate Ca(2+). His-209 lines the Zn(2+) pocket. Glu-210 is an active-site residue. Residues His-213 and His-219 each coordinate Zn(2+).

It belongs to the peptidase M10A family. The cofactor is Ca(2+). Zn(2+) is required as a cofactor.

The protein resides in the secreted. The protein localises to the extracellular space. Its subcellular location is the extracellular matrix. The catalysed reaction is Cleavage of 14-Ala-|-Leu-15 and 16-Tyr-|-Leu-17 in B chain of insulin. No action on collagen types I, II, IV, V. Cleaves gelatin chain alpha2(I) &gt; alpha1(I).. Functionally, degrades casein, gelatins of types I, III, IV, and V, and fibronectin. Activates procollagenase. The sequence is that of Matrilysin (MMP7) from Felis catus (Cat).